The following is a 294-amino-acid chain: ATP phosphoribosyltransferase (294 aa).

The protein belongs to the ATP phosphoribosyltransferase family. Long subfamily. It depends on Mg(2+) as a cofactor.

Its subcellular location is the cytoplasm. The catalysed reaction is 1-(5-phospho-beta-D-ribosyl)-ATP + diphosphate = 5-phospho-alpha-D-ribose 1-diphosphate + ATP. It functions in the pathway amino-acid biosynthesis; L-histidine biosynthesis; L-histidine from 5-phospho-alpha-D-ribose 1-diphosphate: step 1/9. Its activity is regulated as follows. Feedback inhibited by histidine. Catalyzes the condensation of ATP and 5-phosphoribose 1-diphosphate to form N'-(5'-phosphoribosyl)-ATP (PR-ATP). Has a crucial role in the pathway because the rate of histidine biosynthesis seems to be controlled primarily by regulation of HisG enzymatic activity. This Chlorobium chlorochromatii (strain CaD3) protein is ATP phosphoribosyltransferase.